Reading from the N-terminus, the 531-residue chain is 2,3-bisphosphoglycerate-independent phosphoglycerate mutase (531 aa).

Mn(2+) contacts are provided by Asp13 and Ser63. The Phosphoserine intermediate role is filled by Ser63. Substrate contacts are provided by residues His124, 154–155 (RD), Arg187, Arg193, 261–264 (RPDR), and Lys342. 5 residues coordinate Mn(2+): Asp420, His424, Asp462, His463, and His480.

Belongs to the BPG-independent phosphoglycerate mutase family. In terms of assembly, monomer. Requires Mn(2+) as cofactor.

It catalyses the reaction (2R)-2-phosphoglycerate = (2R)-3-phosphoglycerate. Its pathway is carbohydrate degradation; glycolysis; pyruvate from D-glyceraldehyde 3-phosphate: step 3/5. Catalyzes the interconversion of 2-phosphoglycerate and 3-phosphoglycerate. This Mycoplasma mycoides subsp. mycoides SC (strain CCUG 32753 / NCTC 10114 / PG1) protein is 2,3-bisphosphoglycerate-independent phosphoglycerate mutase.